A 1415-amino-acid polypeptide reads, in one-letter code: DNA-directed RNA polymerase subunit beta' (1415 aa).

Positions 69, 71, 84, and 87 each coordinate Zn(2+). The Mg(2+) site is built by D461, D463, and D465. C805, C879, C886, and C889 together coordinate Zn(2+).

The protein belongs to the RNA polymerase beta' chain family. The RNAP catalytic core consists of 2 alpha, 1 beta, 1 beta' and 1 omega subunit. When a sigma factor is associated with the core the holoenzyme is formed, which can initiate transcription. It depends on Mg(2+) as a cofactor. Requires Zn(2+) as cofactor.

The catalysed reaction is RNA(n) + a ribonucleoside 5'-triphosphate = RNA(n+1) + diphosphate. Functionally, DNA-dependent RNA polymerase catalyzes the transcription of DNA into RNA using the four ribonucleoside triphosphates as substrates. This is DNA-directed RNA polymerase subunit beta' from Anaplasma marginale (strain Florida).